Reading from the N-terminus, the 373-residue chain is T-protein (373 aa).

In terms of domain architecture, Chorismate mutase spans 1-90; it reads MVAELTALRD…ESYTSENDKG (90 aa). The Prephenate/arogenate dehydrogenase domain maps to 99–361; sequence RPVVIVGGKG…DHAKRFLVES (263 aa).

In the C-terminal section; belongs to the prephenate/arogenate dehydrogenase family.

It localises to the cytoplasm. The enzyme catalyses chorismate = prephenate. The catalysed reaction is prephenate + NAD(+) = 3-(4-hydroxyphenyl)pyruvate + CO2 + NADH. The protein operates within amino-acid biosynthesis; L-tyrosine biosynthesis; (4-hydroxyphenyl)pyruvate from prephenate (NAD(+) route): step 1/1. It functions in the pathway metabolic intermediate biosynthesis; prephenate biosynthesis; prephenate from chorismate: step 1/1. The sequence is that of T-protein (tyrA) from Enterobacter agglomerans (Erwinia herbicola).